The primary structure comprises 360 residues: Glycerol-3-phosphate dehydrogenase [NAD(+)], cytoplasmic (360 aa).

NAD(+) is bound by residues 11–16 (GSGNWG), Phe98, Lys121, and Ala155. Lys121 provides a ligand contact to substrate. Lys206 acts as the Proton acceptor in catalysis. Positions 270 and 299 each coordinate NAD(+). Position 270–271 (270–271 (RN)) interacts with substrate.

Belongs to the NAD-dependent glycerol-3-phosphate dehydrogenase family. As to quaternary structure, homodimer.

The protein resides in the cytoplasm. It catalyses the reaction sn-glycerol 3-phosphate + NAD(+) = dihydroxyacetone phosphate + NADH + H(+). Its pathway is phospholipid metabolism; alpha-glycerophosphate cycle. The chain is Glycerol-3-phosphate dehydrogenase [NAD(+)], cytoplasmic (Gpdh1) from Drosophila kanekoi (Fruit fly).